A 245-amino-acid polypeptide reads, in one-letter code: rRNA adenine N-6-methyltransferase (245 aa).

Asn-10, Leu-12, Gly-37, Glu-58, Asp-83, and Ser-100 together coordinate S-adenosyl-L-methionine.

This sequence belongs to the class I-like SAM-binding methyltransferase superfamily. rRNA adenine N(6)-methyltransferase family.

The catalysed reaction is adenosine(2085) in 23S rRNA + 2 S-adenosyl-L-methionine = N(6)-dimethyladenosine(2085) in 23S rRNA + 2 S-adenosyl-L-homocysteine + 2 H(+). In terms of biological role, this protein produces a dimethylation of the adenine residue at position 2085 in 23S rRNA, resulting in reduced affinity between ribosomes and macrolide-lincosamide-streptogramin B antibiotics. This Clostridium perfringens protein is rRNA adenine N-6-methyltransferase (ermBP).